The primary structure comprises 89 residues: Small ribosomal subunit protein uS14A (89 aa).

It belongs to the universal ribosomal protein uS14 family. As to quaternary structure, part of the 30S ribosomal subunit. Contacts proteins S3 and S10.

Binds 16S rRNA, required for the assembly of 30S particles and may also be responsible for determining the conformation of the 16S rRNA at the A site. This Staphylococcus saprophyticus subsp. saprophyticus (strain ATCC 15305 / DSM 20229 / NCIMB 8711 / NCTC 7292 / S-41) protein is Small ribosomal subunit protein uS14A.